Here is a 302-residue protein sequence, read N- to C-terminus: Ornithine carbamoyltransferase (302 aa).

Residues 52–55 (STRT), Gln79, Arg103, and 130–133 (HPCQ) contribute to the carbamoyl phosphate site. Residues Asn161, Asp222, and 226–227 (SM) each bind L-ornithine. Residues 262–263 (CL) and Arg290 contribute to the carbamoyl phosphate site.

The protein belongs to the aspartate/ornithine carbamoyltransferase superfamily. OTCase family.

The protein resides in the cytoplasm. It carries out the reaction carbamoyl phosphate + L-ornithine = L-citrulline + phosphate + H(+). Its pathway is amino-acid biosynthesis; L-arginine biosynthesis; L-arginine from L-ornithine and carbamoyl phosphate: step 1/3. In terms of biological role, reversibly catalyzes the transfer of the carbamoyl group from carbamoyl phosphate (CP) to the N(epsilon) atom of ornithine (ORN) to produce L-citrulline. This is Ornithine carbamoyltransferase from Syntrophus aciditrophicus (strain SB).